A 964-amino-acid polypeptide reads, in one-letter code: Syndetin (964 aa).

Met-1 carries the N-acetylmethionine modification. Residues 1–25 (MQKIKSLMTRQGLKSPPESLNDLGA) are disordered. Position 15 is a phosphoserine (Ser-15). Coiled-coil stretches lie at residues 81 to 107 (LNLQ…VADL) and 216 to 244 (YSCI…LSKI). Residues Ser-494, Ser-498, Ser-559, and Ser-561 each carry the phosphoserine modification. Residues 532–563 (DEETEDVLASNGYESDEQEKSAYQDYDSDSDV) are disordered. Lys-963 is covalently cross-linked (Glycyl lysine isopeptide (Lys-Gly) (interchain with G-Cter in SUMO1); alternate). A Glycyl lysine isopeptide (Lys-Gly) (interchain with G-Cter in SUMO2); alternate cross-link involves residue Lys-963.

The protein belongs to the syndetin family. In terms of assembly, component of the endosome-associated retrograde protein (EARP) complex, composed of VPS51, VPS52, VPS53 and VPS50/Syndetin. The EARP complex interacts with EIPR1. Interacts with VPS51 and VPS53 in an EIPR1-independent manner. In terms of tissue distribution, expressed in the brain (at protein level).

It localises to the recycling endosome. The protein localises to the membrane. Its function is as follows. Acts as a component of the EARP complex that is involved in endocytic recycling. The EARP complex associates with Rab4-positive endosomes and promotes recycling of internalized transferrin receptor (TFRC) to the plasma membrane. Within the EARP complex, required to tether the complex to recycling endosomes. Not involved in retrograde transport from early and late endosomes to the trans-Golgi network (TGN). This chain is Syndetin, found in Rattus norvegicus (Rat).